The chain runs to 295 residues: 5'-adenylylsulfate reductase-like 6 (295 aa).

A signal peptide spans 1–22 (MEKKLTLLLLVVVVLFVNLTNA). The Thioredoxin domain occupies 23–161 (TVRVQICPRE…LVAFYTDVTG (139 aa)). An N-linked (GlcNAc...) asparagine glycan is attached at Asn136. Residues 208–228 (ATVFVLLRLLHLISPTMVVFV) form a helical membrane-spanning segment.

It is found in the membrane. The polypeptide is 5'-adenylylsulfate reductase-like 6 (APRL6) (Arabidopsis thaliana (Mouse-ear cress)).